Here is a 1148-residue protein sequence, read N- to C-terminus: Envelopment polyprotein (1148 aa).

An N-terminal signal peptide occupies residues 1 to 23 (MGELSPVCLCLLLQGLLLCNTGA). The Lumenal portion of the chain corresponds to 24–496 (ARNLNELKME…PGLHGWATML (473 aa)). Disulfide bonds link cysteine 34/cysteine 159, cysteine 68/cysteine 165, cysteine 117/cysteine 136, cysteine 141/cysteine 146, cysteine 183/cysteine 193, and cysteine 218/cysteine 257. Asparagine 142 carries an N-linked (GlcNAc...) asparagine; by host glycan. Residue asparagine 357 is glycosylated (N-linked (GlcNAc...) asparagine; by host). Intrachain disulfides connect cysteine 386/cysteine 445, cysteine 390/cysteine 399, cysteine 415/cysteine 434, and cysteine 462/cysteine 485. An N-linked (GlcNAc...) asparagine; by host glycan is attached at asparagine 409. Residues 497-517 (LLLTFCFGWVLIPTITMILLK) traverse the membrane as a helical segment. The Cytoplasmic portion of the chain corresponds to 518–637 (ILIAFAYLCS…LSLFRYRSRF (120 aa)). A binding to the ribonucleoprotein region spans residues 526 to 543 (CSKYNTDSKFRILIEKVK). CCHC-type zinc fingers lie at residues 555–575 (CEVCQYECETAKELESHRKSC) and 580–601 (CPYCLNPSEATTSALQAHFKVC). 3 binding to the ribonucleoprotein regions span residues 598–615 (FKVCKLTSRFQENLRKSL), 602–613 (KLTSRFQENLRK), and 621–635 (MQGCYRTLSLFRYRS). An ITAM domain is found at 621-644 (MQGCYRTLSLFRYRSRFFVGLVWC). A YxxL motif is present at residues 625–628 (YRTL). A helical membrane pass occupies residues 638–658 (FVGLVWCVLLVLELIVWAASA). Residues 659–1115 (ETQNLNAGWT…WILGVLNGNW (457 aa)) lie on the Lumenal side of the membrane. Disulfide bonds link cysteine 745–cysteine 780, cysteine 749–cysteine 787, cysteine 761–cysteine 894, cysteine 775–cysteine 905, cysteine 790–cysteine 913, cysteine 816–cysteine 825, cysteine 833–cysteine 842, and cysteine 873–cysteine 877. A fusion loop region spans residues 767-787 (YEYETGWGCNPPDCPGVGTGC). N-linked (GlcNAc...) asparagine; by host glycosylation occurs at asparagine 937. 5 disulfide bridges follow: cysteine 979–cysteine 1009, cysteine 1002–cysteine 1054, cysteine 1019–cysteine 1024, cysteine 1055–cysteine 1060, and cysteine 1094–cysteine 1098. Residues 1116-1136 (MVVAVLVVLLILSILLFTLCC) traverse the membrane as a helical segment. Binding to the ribonucleoprotein regions lie at residues 1131–1143 (LFTLCCPRRPSYR) and 1131–1148 (LFTLCCPRRPSYRKEHKP). Residues 1137–1148 (PRRPSYRKEHKP) lie on the Cytoplasmic side of the membrane.

It belongs to the hantavirus envelope glycoprotein family. In terms of assembly, homodimer. Homotetramer; forms heterotetrameric Gn-Gc spikes in the pre-fusion conformation. Interacts (via C-terminus) with the nucleoprotein. Interacts with host TUFM; this interaction contributes to the virus-induced degradation of mitochondria by autophagy, which leads to degradation of host MAVS and inhibition of type I interferon (IFN) responses. Interacts with host MAP1LC3B; this interaction contributes to the virus-induced degradation of mitochondria by autophagy, which leads to degradation of host MAVS and inhibition of type I interferon (IFN) responses. Homodimer. Homotetramer; forms heterotetrameric Gn-Gc spikes in the pre-fusion conformation. Homotrimer; forms homotrimer in the post-fusion conformation at acidic pH. Interacts (via C-terminus) with the nucleoprotein. Envelope polyprotein precursor is quickly cleaved in vivo just after synthesis, presumably by host signal peptidase.

The protein localises to the virion membrane. The protein resides in the host cell surface. It localises to the host Golgi apparatus membrane. Its subcellular location is the host endoplasmic reticulum membrane. It is found in the host mitochondrion. Its function is as follows. Forms homotetramers with glycoprotein C at the surface of the virion. Attaches the virion to host cell receptors including integrin ITGAV/ITGB3. This attachment induces virion internalization predominantly through clathrin-dependent endocytosis. Mediates the assembly and budding of infectious virus particles through its interaction with the nucleocapsid protein and the viral genome. May dysregulate normal immune and endothelial cell responses through an ITAM motif. Translocates to mitochondria, binds to host TUFM and recruits MAP1LC3B. These interactions induce mitochondrial autophagy and therefore destruction of host MAVS leading to inhibition of type I interferon (IFN) responses. Concomitant breakdown of glycoprotein N is apparently prevented by the nucleoprotein that may inhibit Gn-stimulated autophagosome-lysosome fusion. Interacts with the viral genomic RNA. In terms of biological role, forms homotetramers with glycoprotein N at the surface of the virion. Attaches the virion to host cell receptors including integrin ITGAV/ITGB3. This attachment induces virion internalization predominantly through clathrin-dependent endocytosis. Class II fusion protein that promotes fusion of viral membrane with host endosomal membrane after endocytosis of the virion. This is Envelopment polyprotein (GP) from Homo sapiens (Human).